The primary structure comprises 411 residues: Phospholipase A1-II 6 (411 aa).

Residue serine 226 is the Acyl-ester intermediate of the active site. Active-site charge relay system residues include serine 226, aspartate 296, and histidine 334.

Belongs to the AB hydrolase superfamily. Lipase family.

Its subcellular location is the cytoplasm. Acylhydrolase that catalyzes the hydrolysis of phospholipids at the sn-1 position. The protein is Phospholipase A1-II 6 of Oryza sativa subsp. japonica (Rice).